Reading from the N-terminus, the 122-residue chain is uncharacterized protein (122 aa).

A helical membrane pass occupies residues 9-25 (AFPSPVFLGGVFFVFFF).

It is found in the cytoplasm. The protein localises to the nucleus. It localises to the membrane. This is an uncharacterized protein from Saccharomyces cerevisiae (strain ATCC 204508 / S288c) (Baker's yeast).